The following is a 624-amino-acid chain: Probable Xaa-Pro aminopeptidase P (624 aa).

Residues aspartate 421, aspartate 432, glutamate 530, and glutamate 544 each coordinate Mn(2+).

The protein belongs to the peptidase M24B family. The cofactor is Mn(2+).

It carries out the reaction Release of any N-terminal amino acid, including proline, that is linked to proline, even from a dipeptide or tripeptide.. Functionally, catalyzes the removal of a penultimate prolyl residue from the N-termini of peptides. The polypeptide is Probable Xaa-Pro aminopeptidase P (AMPP) (Arthroderma otae (strain ATCC MYA-4605 / CBS 113480) (Microsporum canis)).